Consider the following 134-residue polypeptide: ATP synthase epsilon chain, chloroplastic (134 aa).

This sequence belongs to the ATPase epsilon chain family. In terms of assembly, F-type ATPases have 2 components, CF(1) - the catalytic core - and CF(0) - the membrane proton channel. CF(1) has five subunits: alpha(3), beta(3), gamma(1), delta(1), epsilon(1). CF(0) has three main subunits: a, b and c.

It localises to the plastid. It is found in the chloroplast thylakoid membrane. In terms of biological role, produces ATP from ADP in the presence of a proton gradient across the membrane. In Gracilaria tenuistipitata var. liui (Red alga), this protein is ATP synthase epsilon chain, chloroplastic.